Reading from the N-terminus, the 156-residue chain is Endoribonuclease YbeY (156 aa).

Zn(2+)-binding residues include H117, H121, and H127.

It belongs to the endoribonuclease YbeY family. It depends on Zn(2+) as a cofactor.

It is found in the cytoplasm. Its function is as follows. Single strand-specific metallo-endoribonuclease involved in late-stage 70S ribosome quality control and in maturation of the 3' terminus of the 16S rRNA. The protein is Endoribonuclease YbeY of Shewanella piezotolerans (strain WP3 / JCM 13877).